The chain runs to 293 residues: Cbb3-type cytochrome c oxidase subunit FixP (293 aa).

Positions 1 to 11 (MSTSHESHHAP) are enriched in basic and acidic residues. The segment at 1–25 (MSTSHESHHAPVDGAGGPSTTGHEW) is disordered. A helical membrane pass occupies residues 43 to 63 (FYATIIWAFGYWVAYPAWPLV). Cytochrome c domains are found at residues 114 to 201 (LARA…RSLS) and 209 to 290 (PAAK…HTLG). Residues cysteine 127, cysteine 130, histidine 131, methionine 178, cysteine 222, cysteine 225, histidine 226, and methionine 267 each contribute to the heme c site.

It belongs to the CcoP / FixP family. As to quaternary structure, component of the cbb3-type cytochrome c oxidase at least composed of FixN, FixO, FixQ and FixP. Requires heme c as cofactor.

The protein localises to the cell inner membrane. Its pathway is energy metabolism; oxidative phosphorylation. Its function is as follows. C-type cytochrome. Part of the cbb3-type cytochrome c oxidase complex. FixP subunit is required for transferring electrons from donor cytochrome c via its heme groups to FixO subunit. From there, electrons are shuttled to the catalytic binuclear center of FixN subunit where oxygen reduction takes place. The complex also functions as a proton pump. In Azorhizobium caulinodans (strain ATCC 43989 / DSM 5975 / JCM 20966 / LMG 6465 / NBRC 14845 / NCIMB 13405 / ORS 571), this protein is Cbb3-type cytochrome c oxidase subunit FixP.